A 208-amino-acid chain; its full sequence is Cytidylate kinase (208 aa).

9-17 (GPSASGKSS) is an ATP binding site.

This sequence belongs to the cytidylate kinase family. Type 1 subfamily.

Its subcellular location is the cytoplasm. The enzyme catalyses CMP + ATP = CDP + ADP. It carries out the reaction dCMP + ATP = dCDP + ADP. This is Cytidylate kinase from Thermus thermophilus (strain ATCC BAA-163 / DSM 7039 / HB27).